The chain runs to 290 residues: Ribosomal RNA small subunit methyltransferase A (290 aa).

Residues N27, L29, G54, E75, D100, and N125 each contribute to the S-adenosyl-L-methionine site.

It belongs to the class I-like SAM-binding methyltransferase superfamily. rRNA adenine N(6)-methyltransferase family. RsmA subfamily.

It is found in the cytoplasm. The enzyme catalyses adenosine(1518)/adenosine(1519) in 16S rRNA + 4 S-adenosyl-L-methionine = N(6)-dimethyladenosine(1518)/N(6)-dimethyladenosine(1519) in 16S rRNA + 4 S-adenosyl-L-homocysteine + 4 H(+). Specifically dimethylates two adjacent adenosines (A1518 and A1519) in the loop of a conserved hairpin near the 3'-end of 16S rRNA in the 30S particle. May play a critical role in biogenesis of 30S subunits. This is Ribosomal RNA small subunit methyltransferase A from Streptococcus pneumoniae (strain ATCC BAA-255 / R6).